Reading from the N-terminus, the 1388-residue chain is Putative ATP-dependent RNA helicase DHX57 (1388 aa).

Positions 1–11 are enriched in basic residues; sequence MSSSVRRKGKP. Disordered stretches follow at residues 1 to 107 and 121 to 154; these read MSSS…MTSE and EQGADAGSERGTSGEEEDSEPQCGEEQGWPAGQE. Gly residues predominate over residues 34 to 51; that stretch reads HGGGGGGGGSCGGGGGGS. The segment covering 79–89 has biased composition (basic and acidic residues); that stretch reads DSNKSKGETRP. Phosphoserine is present on residues serine 128 and serine 133. The 46-residue stretch at 175-220 folds into the UBA domain; that stretch reads PVPECAVSPLAVQKLSRYGFHTEHCQLALRICDGDLGAALEHLLRQ. The C3H1-type zinc finger occupies 299 to 326; the sequence is DTSPETCKFYLKGNCKFGSKCKFKHEVP. Position 475 is a phosphoserine (serine 475). In terms of domain architecture, Helicase ATP-binding spans 555–722; the sequence is LKLLSKHQVV…FSYCPVITIP (168 aa). 568-575 is a binding site for ATP; it reads GMTGCGKT. The short motif at 669-672 is the DEVH box element; it reads DEVH. The 181-residue stretch at 832 to 1012 folds into the Helicase C-terminal domain; the sequence is LIEALLEWIV…QLCLRIKILE (181 aa).

It belongs to the DEAD box helicase family. DEAH subfamily.

It catalyses the reaction ATP + H2O = ADP + phosphate + H(+). In terms of biological role, probable ATP-binding RNA helicase. This is Putative ATP-dependent RNA helicase DHX57 (Dhx57) from Mus musculus (Mouse).